The primary structure comprises 526 residues: Keratin, type I cytoskeletal 10 (526 aa).

The span at 1–15 (MSVRYSSSKQYSSSR) shows a compositional bias: low complexity. A disordered region spans residues 1–29 (MSVRYSSSKQYSSSRSGGGGGGGSSLRIS). Positions 1–126 (MSVRYSSSKQ…FGDGGLISGN (126 aa)) are head. Residues serine 14, serine 16, serine 34, serine 45, serine 48, and serine 151 each carry the phosphoserine modification. The segment at 127–162 (QKITMQNLNDRLASYLDKVRALEESNYELEVKIKEW) is coil 1A. In terms of domain architecture, IF rod spans 127–441 (QKITMQNLND…SLLEGEGSSG (315 aa)). The interval 163 to 183 (YEKYGNSRQREPRDYSKYYQT) is linker 1. The tract at residues 184–275 (IDDLKNQIFN…KNHEEEMRDL (92 aa)) is coil 1B. A linker 12 region spans residues 276–298 (QNVSTGDVNVEMNAAPGVDLTEL). A coil 2 region spans residues 299–437 (LNNMRSQYEQ…QTYRSLLEGE (139 aa)). Residues 438–526 (GSSGGGSYGG…GESSSKGPRY (89 aa)) form a tail region. Residues 458–505 (GGGGYGGGSSSGGYGGGSSSGGGHGGSSGGSYGGGSSSGGGHGGGSSS) show a composition bias toward gly residues. Residues 458 to 526 (GGGGYGGGSS…GESSSKGPRY (69 aa)) form a disordered region. The span at 506 to 526 (GGHKSTTTGSVGESSSKGPRY) shows a compositional bias: low complexity.

Belongs to the intermediate filament family. In terms of assembly, heterotetramer of two type I and two type II keratins. Heterodimer with KRT1. Two heterodimers of KRT1 and KRT10 form a heterotetramer. The KRT10 subunit in the heterotetramer is probably disulfide-linked.

Its subcellular location is the secreted. The protein localises to the extracellular space. It localises to the cell surface. The protein resides in the cytoplasm. Plays a role in the establishment of the epidermal barrier on plantar skin. Involved in the maintenance of cell layer development and keratin filament bundles in suprabasal cells of the epithelium. This is Keratin, type I cytoskeletal 10 (KRT10) from Bos taurus (Bovine).